An 88-amino-acid polypeptide reads, in one-letter code: Small cysteine-rich outer membrane protein OmcA (88 aa).

Residues 1-18 form the signal peptide; sequence MKKTALLAALCSVVSLSS. Cys-19 carries N-palmitoyl cysteine lipidation. A lipid anchor (S-diacylglycerol cysteine) is attached at Cys-19.

In terms of assembly, part of a disulfide cross-linked outer membrane complex (COMC) composed of the major outer membrane porin (MOMP), the small cysteine-rich protein (OmcA) and the large cysteine-rich periplasmic protein (OmcB).

The protein localises to the cell outer membrane. Its function is as follows. In elementary bodies (EBs, the infectious stage, which is able to survive outside the host cell) provides the structural integrity of the outer envelope through disulfide cross-links with the large cysteine-rich periplasmic protein and the major outer membrane porin. It has been described in publications as the Sarkosyl-insoluble COMC (Chlamydia outer membrane complex), and serves as the functional equivalent of peptidoglycan. This is Small cysteine-rich outer membrane protein OmcA (omcA) from Chlamydia muridarum (strain MoPn / Nigg).